Here is a 981-residue protein sequence, read N- to C-terminus: uncharacterized protein (981 aa).

The region spanning 535-612 is the Carrier domain; the sequence is VLLNPVAIEI…SIASIIQKKS (78 aa). Residue serine 571 is modified to O-(pantetheine 4'-phosphoryl)serine.

The protein belongs to the ATP-dependent AMP-binding enzyme family.

This is an uncharacterized protein from Schizosaccharomyces pombe (strain 972 / ATCC 24843) (Fission yeast).